A 170-amino-acid polypeptide reads, in one-letter code: Adenine phosphoribosyltransferase (170 aa).

It belongs to the purine/pyrimidine phosphoribosyltransferase family. As to quaternary structure, homodimer.

It is found in the cytoplasm. The catalysed reaction is AMP + diphosphate = 5-phospho-alpha-D-ribose 1-diphosphate + adenine. The protein operates within purine metabolism; AMP biosynthesis via salvage pathway; AMP from adenine: step 1/1. Functionally, catalyzes a salvage reaction resulting in the formation of AMP, that is energically less costly than de novo synthesis. This Acaryochloris marina (strain MBIC 11017) protein is Adenine phosphoribosyltransferase.